A 348-amino-acid chain; its full sequence is Phenylalanine--tRNA ligase alpha subunit (348 aa).

Glutamate 259 lines the Mg(2+) pocket.

This sequence belongs to the class-II aminoacyl-tRNA synthetase family. Phe-tRNA synthetase alpha subunit type 1 subfamily. As to quaternary structure, tetramer of two alpha and two beta subunits. It depends on Mg(2+) as a cofactor.

The protein resides in the cytoplasm. It carries out the reaction tRNA(Phe) + L-phenylalanine + ATP = L-phenylalanyl-tRNA(Phe) + AMP + diphosphate + H(+). This chain is Phenylalanine--tRNA ligase alpha subunit, found in Limosilactobacillus reuteri (strain DSM 20016) (Lactobacillus reuteri).